Reading from the N-terminus, the 133-residue chain is Ribulose bisphosphate carboxylase small subunit (133 aa).

Belongs to the RuBisCO small chain family. Heterohexadecamer of 8 large and 8 small subunits.

Functionally, ruBisCO catalyzes two reactions: the carboxylation of D-ribulose 1,5-bisphosphate, the primary event in carbon dioxide fixation, as well as the oxidative fragmentation of the pentose substrate. Both reactions occur simultaneously and in competition at the same active site. Although the small subunit is not catalytic it is essential for maximal activity. This chain is Ribulose bisphosphate carboxylase small subunit, found in Xanthobacter flavus.